The following is a 361-amino-acid chain: Putative agmatine deiminase (361 aa).

C354 acts as the Amidino-cysteine intermediate in catalysis.

It belongs to the agmatine deiminase family.

The enzyme catalyses agmatine + H2O = N-carbamoylputrescine + NH4(+). The sequence is that of Putative agmatine deiminase from Streptococcus pneumoniae (strain P1031).